Reading from the N-terminus, the 379-residue chain is Cytochrome b (379 aa).

4 consecutive transmembrane segments (helical) span residues 33–53 (FGSLLGLCLISQILTGLFLAM), 77–98 (WLIRNLHANGASFFFICLYLHI), 113–133 (WNIGVVLFLLVMMTAFVGYVL), and 178–198 (FFAFHFLFPFVVAGATMIHLL). Positions 83 and 97 each coordinate heme b. Heme b is bound by residues His182 and His196. His201 serves as a coordination point for a ubiquinone. Helical transmembrane passes span 226-246 (YKDLLGFIIMLTALTMLALFY), 288-308 (LGGVLALLSSILVLMVVPILH), 320-340 (ASQLLFWILVADMLVLTWIGG), and 347-367 (YIIIGQVASVLYFSLFLVLNP).

Belongs to the cytochrome b family. In terms of assembly, the cytochrome bc1 complex contains 3 respiratory subunits (MT-CYB, CYC1 and UQCRFS1), 2 core proteins (UQCRC1 and UQCRC2) and probably 6 low-molecular weight proteins. The cofactor is heme b.

It is found in the mitochondrion inner membrane. Functionally, component of the ubiquinol-cytochrome c reductase complex (complex III or cytochrome b-c1 complex) that is part of the mitochondrial respiratory chain. The b-c1 complex mediates electron transfer from ubiquinol to cytochrome c. Contributes to the generation of a proton gradient across the mitochondrial membrane that is then used for ATP synthesis. The polypeptide is Cytochrome b (mt-cyb) (Anguilla reinhardtii (Speckled longfin eel)).